Consider the following 134-residue polypeptide: Protein NrdI (134 aa).

The protein belongs to the NrdI family.

Its function is as follows. Probably involved in ribonucleotide reductase function. The protein is Protein NrdI of Chromohalobacter salexigens (strain ATCC BAA-138 / DSM 3043 / CIP 106854 / NCIMB 13768 / 1H11).